Here is a 464-residue protein sequence, read N- to C-terminus: D-2-hydroxyglutarate dehydrogenase (464 aa).

Positions Phe-37–Gln-216 constitute an FAD-binding PCMH-type domain. (R)-2-hydroxyglutarate is bound by residues Arg-325, Ser-329, and Lys-339. Arg-325, Ser-329, and Lys-339 together coordinate (R)-malate. Zn(2+) contacts are provided by His-374 and His-381. Asn-383 lines the (R)-2-hydroxyglutarate pocket. Position 420 (Glu-420) interacts with Zn(2+). His-421 provides a ligand contact to (R)-2-hydroxyglutarate. His-421 lines the (R)-malate pocket.

Belongs to the FAD-binding oxidoreductase/transferase type 4 family. Homodimer. Requires FAD as cofactor.

The enzyme catalyses (R)-2-hydroxyglutarate + A = 2-oxoglutarate + AH2. The catalysed reaction is (R)-malate + A = oxaloacetate + AH2. With respect to regulation, activated by Zn(2+) ions at low concentrations (10 uM) and inhibited by Zn(2+), Fe(2+) and Ni(2+) at high concentrations (10 mM). Catalyzes the dehydrogenation of (R)-2-hydroxyglutarate (D-2-hydroxyglutarate or D-2-HG) to 2-oxoglutarate and of (R)-malate (D-malate) to oxaloacetate. Is functionally tied to L-serine biosynthesis, via its coupling with the D-3-phosphoglycerate dehydrogenase SerA, encoded by the adjacent gene in the locus. Is required for the utilization of D-2-hydroxyglutarate as well as D-malate as the sole carbon source for growth of P.stutzeri. Active in vitro with artificial electron acceptors such as 2,6-dichlorophenolindophenol (DCPIP) and appears to couple with electron transfer flavoprotein (ETF) for efficient oxidation of both D-2-hydroxyglutarate and D-malate in vivo. Cannot catalyze the oxidation of L-2-hydroxyglutarate, D-lactate, D-tartrate, D-2-hydroxybutanoate, D-mandelate, D-glycerate and D-phenyllactate. The sequence is that of D-2-hydroxyglutarate dehydrogenase from Stutzerimonas stutzeri (strain A1501) (Pseudomonas stutzeri).